The chain runs to 591 residues: Aspartate--tRNA ligase (591 aa).

E174 contacts L-aspartate. The segment at Q198–K201 is aspartate. L-aspartate is bound at residue R220. Residues R220–E222 and Q229 each bind ATP. H450 contributes to the L-aspartate binding site. E486 is an ATP binding site. R493 is an L-aspartate binding site. G538–R541 contributes to the ATP binding site.

This sequence belongs to the class-II aminoacyl-tRNA synthetase family. Type 1 subfamily. Homodimer.

The protein localises to the cytoplasm. The catalysed reaction is tRNA(Asp) + L-aspartate + ATP = L-aspartyl-tRNA(Asp) + AMP + diphosphate. In terms of biological role, catalyzes the attachment of L-aspartate to tRNA(Asp) in a two-step reaction: L-aspartate is first activated by ATP to form Asp-AMP and then transferred to the acceptor end of tRNA(Asp). The sequence is that of Aspartate--tRNA ligase from Leuconostoc mesenteroides subsp. mesenteroides (strain ATCC 8293 / DSM 20343 / BCRC 11652 / CCM 1803 / JCM 6124 / NCDO 523 / NBRC 100496 / NCIMB 8023 / NCTC 12954 / NRRL B-1118 / 37Y).